The following is a 79-amino-acid chain: Cyclin-dependent kinases regulatory subunit 2 (79 aa).

Position 4 is an N6-acetyllysine (K4).

It belongs to the CKS family. In terms of assembly, forms a homohexamer that can probably bind six kinase subunits.

Binds to the catalytic subunit of the cyclin dependent kinases and is essential for their biological function. The polypeptide is Cyclin-dependent kinases regulatory subunit 2 (CKS2) (Bos taurus (Bovine)).